The primary structure comprises 380 residues: Hydrogenase maturation factor HypD1 (380 aa).

Fe cation is bound by residues Cys-36, Cys-64, and Cys-67.

It belongs to the HypD family. The cofactor is [4Fe-4S] cluster.

The protein operates within protein modification; [NiFe] hydrogenase maturation. Its function is as follows. Involved in the maturation of [NiFe] hydrogenases. Involved in the biosynthesis of the Fe(CN)(2)CO cofactor. This is Hydrogenase maturation factor HypD1 (hypD1) from Bradyrhizobium diazoefficiens (strain JCM 10833 / BCRC 13528 / IAM 13628 / NBRC 14792 / USDA 110).